Reading from the N-terminus, the 119-residue chain is Protein sigma-1-small (119 aa).

It belongs to the orthoreovirus sigma-1s protein family.

The protein is Protein sigma-1-small (S1) of Mammalia (T1L).